The chain runs to 834 residues: Probable receptor-like protein kinase At2g23200 (834 aa).

A signal peptide spans 1–28 (MENFCFQDSVSLFITIMVLVLLPRLSLS). Residues 29–405 (DTSTYTRPEN…SSSRVHIITG (377 aa)) are Extracellular-facing. N-linked (GlcNAc...) asparagine glycosylation is found at asparagine 61, asparagine 149, asparagine 221, asparagine 246, asparagine 277, asparagine 289, asparagine 314, asparagine 352, asparagine 361, and asparagine 394. Residues 406-426 (CAVAAAAASALVFSLLFMVFL) traverse the membrane as a helical segment. Residues 427 to 834 (KRRRSKKTKP…FSQLKISDAR (408 aa)) lie on the Cytoplasmic side of the membrane. In terms of domain architecture, Protein kinase spans 488–761 (FDEQLLIGKG…RDVIWDLEYV (274 aa)). ATP is bound by residues 494–502 (IGKGGFGYV) and lysine 516. The Proton acceptor role is filled by aspartate 613.

Belongs to the protein kinase superfamily. Ser/Thr protein kinase family.

It localises to the membrane. This is Probable receptor-like protein kinase At2g23200 from Arabidopsis thaliana (Mouse-ear cress).